Consider the following 37-residue polypeptide: Large ribosomal subunit protein bL36 (37 aa).

This sequence belongs to the bacterial ribosomal protein bL36 family.

In Halalkalibacterium halodurans (strain ATCC BAA-125 / DSM 18197 / FERM 7344 / JCM 9153 / C-125) (Bacillus halodurans), this protein is Large ribosomal subunit protein bL36.